Consider the following 102-residue polypeptide: MSIPLYEVLILASILFAMGLACVVAWRANVIMMLIGIEIMLNAVMLTFVGGSAHWGIAEGQVFSLMIMALTSAEVSLALAMVAYLHRRKQSVDTDDFSSMKG.

Helical transmembrane passes span 5–25 (LYEV…CVVA), 30–50 (VIMM…TFVG), and 62–82 (VFSL…LAMV).

It belongs to the complex I subunit 4L family. NDH-1 is composed of 14 different subunits. Subunits NuoA, H, J, K, L, M, N constitute the membrane sector of the complex.

It localises to the cell inner membrane. It carries out the reaction a quinone + NADH + 5 H(+)(in) = a quinol + NAD(+) + 4 H(+)(out). In terms of biological role, NDH-1 shuttles electrons from NADH, via FMN and iron-sulfur (Fe-S) centers, to quinones in the respiratory chain. The immediate electron acceptor for the enzyme in this species is believed to be ubiquinone. Couples the redox reaction to proton translocation (for every two electrons transferred, four hydrogen ions are translocated across the cytoplasmic membrane), and thus conserves the redox energy in a proton gradient. This is NADH-quinone oxidoreductase subunit K 1 from Geobacter sp. (strain M21).